Here is a 149-residue protein sequence, read N- to C-terminus: Deoxyuridine 5'-triphosphate nucleotidohydrolase (149 aa).

Substrate is bound by residues Arg-68 to Gly-70, Asn-81, Leu-85 to Asp-87, and Met-95.

This sequence belongs to the dUTPase family. The cofactor is Mg(2+).

The catalysed reaction is dUTP + H2O = dUMP + diphosphate + H(+). It participates in pyrimidine metabolism; dUMP biosynthesis; dUMP from dCTP (dUTP route): step 2/2. Its function is as follows. This enzyme is involved in nucleotide metabolism: it produces dUMP, the immediate precursor of thymidine nucleotides and it decreases the intracellular concentration of dUTP so that uracil cannot be incorporated into DNA. The chain is Deoxyuridine 5'-triphosphate nucleotidohydrolase from Janthinobacterium sp. (strain Marseille) (Minibacterium massiliensis).